Here is a 176-residue protein sequence, read N- to C-terminus: NAD(P)H-quinone oxidoreductase subunit 6, chloroplastic (176 aa).

The next 5 helical transmembrane spans lie at Phe10–Ala30, Ile33–Ala53, Ala61–Ile81, Leu92–Ile112, and Phe152–Ala172.

The protein belongs to the complex I subunit 6 family. NDH is composed of at least 16 different subunits, 5 of which are encoded in the nucleus.

It is found in the plastid. The protein localises to the chloroplast thylakoid membrane. It catalyses the reaction a plastoquinone + NADH + (n+1) H(+)(in) = a plastoquinol + NAD(+) + n H(+)(out). The catalysed reaction is a plastoquinone + NADPH + (n+1) H(+)(in) = a plastoquinol + NADP(+) + n H(+)(out). Functionally, NDH shuttles electrons from NAD(P)H:plastoquinone, via FMN and iron-sulfur (Fe-S) centers, to quinones in the photosynthetic chain and possibly in a chloroplast respiratory chain. The immediate electron acceptor for the enzyme in this species is believed to be plastoquinone. Couples the redox reaction to proton translocation, and thus conserves the redox energy in a proton gradient. This Guizotia abyssinica (Niger) protein is NAD(P)H-quinone oxidoreductase subunit 6, chloroplastic (ndhG).